We begin with the raw amino-acid sequence, 434 residues long: Mannose-6-phosphate isomerase (434 aa).

Q109, H111, and E136 together coordinate Zn(2+). A compositionally biased stretch (polar residues) spans 181–191 (SLGLPTSQPPD). Positions 181–200 (SLGLPTSQPPDTSLFKPTES) are disordered. H291 is a Zn(2+) binding site. R310 is a catalytic residue.

It belongs to the mannose-6-phosphate isomerase type 1 family. It depends on Zn(2+) as a cofactor.

Its subcellular location is the cytoplasm. The enzyme catalyses D-mannose 6-phosphate = D-fructose 6-phosphate. The protein operates within nucleotide-sugar biosynthesis; GDP-alpha-D-mannose biosynthesis; alpha-D-mannose 1-phosphate from D-fructose 6-phosphate: step 1/2. Its function is as follows. Involved in the synthesis of the GDP-mannose and dolichol-phosphate-mannose required for a number of critical mannosyl transfer reactions. This chain is Mannose-6-phosphate isomerase (MAN1), found in Cryptococcus neoformans var. neoformans serotype D (strain JEC21 / ATCC MYA-565) (Filobasidiella neoformans).